The sequence spans 417 residues: Serine hydroxymethyltransferase (417 aa).

Residues leucine 121 and 125–127 (GHL) each bind (6S)-5,6,7,8-tetrahydrofolate. Lysine 229 is modified (N6-(pyridoxal phosphate)lysine). Position 355-357 (355-357 (SPF)) interacts with (6S)-5,6,7,8-tetrahydrofolate.

Belongs to the SHMT family. Homodimer. Requires pyridoxal 5'-phosphate as cofactor.

The protein resides in the cytoplasm. It catalyses the reaction (6R)-5,10-methylene-5,6,7,8-tetrahydrofolate + glycine + H2O = (6S)-5,6,7,8-tetrahydrofolate + L-serine. Its pathway is one-carbon metabolism; tetrahydrofolate interconversion. It participates in amino-acid biosynthesis; glycine biosynthesis; glycine from L-serine: step 1/1. Functionally, catalyzes the reversible interconversion of serine and glycine with tetrahydrofolate (THF) serving as the one-carbon carrier. This reaction serves as the major source of one-carbon groups required for the biosynthesis of purines, thymidylate, methionine, and other important biomolecules. Also exhibits THF-independent aldolase activity toward beta-hydroxyamino acids, producing glycine and aldehydes, via a retro-aldol mechanism. The sequence is that of Serine hydroxymethyltransferase from Salmonella schwarzengrund (strain CVM19633).